A 685-amino-acid chain; its full sequence is DNA ligase (685 aa).

NAD(+) is bound by residues 39–43, 88–89, and glutamate 119; these read DGEYD and SL. Lysine 121 (N6-AMP-lysine intermediate) is an active-site residue. Residues arginine 142, glutamate 182, lysine 302, and lysine 326 each contribute to the NAD(+) site. Residues cysteine 420, cysteine 423, cysteine 438, and cysteine 443 each coordinate Zn(2+). Positions 606-685 constitute a BRCT domain; sequence DNATFFSEKR…QTFLEHLDRG (80 aa).

This sequence belongs to the NAD-dependent DNA ligase family. LigA subfamily. Mg(2+) is required as a cofactor. Requires Mn(2+) as cofactor.

The catalysed reaction is NAD(+) + (deoxyribonucleotide)n-3'-hydroxyl + 5'-phospho-(deoxyribonucleotide)m = (deoxyribonucleotide)n+m + AMP + beta-nicotinamide D-nucleotide.. Functionally, DNA ligase that catalyzes the formation of phosphodiester linkages between 5'-phosphoryl and 3'-hydroxyl groups in double-stranded DNA using NAD as a coenzyme and as the energy source for the reaction. It is essential for DNA replication and repair of damaged DNA. The chain is DNA ligase from Desulforapulum autotrophicum (strain ATCC 43914 / DSM 3382 / VKM B-1955 / HRM2) (Desulfobacterium autotrophicum).